Reading from the N-terminus, the 90-residue chain is uncharacterized protein (90 aa).

A helical transmembrane segment spans residues 46–62 (MALLVVFLVSLFACTTI).

The protein localises to the membrane. This is an uncharacterized protein from Haemophilus influenzae (strain ATCC 51907 / DSM 11121 / KW20 / Rd).